Consider the following 382-residue polypeptide: Homeobox protein SHOOT MERISTEMLESS (382 aa).

The segment at 26 to 59 is disordered; sequence MMMMMPPIMTSHQHHGHDHQHQQQEHDGYAYQSH. Residues 44-53 show a composition bias toward basic and acidic residues; that stretch reads HQHQQQEHDG. The ELK domain maps to 262–282; it reads ELKGQLLRKYSGYLGSLKQEF. Residues 283 to 346 constitute a DNA-binding region (homeobox; TALE-type); the sequence is MKKRKKGKLP…NQRKRHWKPS (64 aa).

The protein belongs to the TALE/KNOX homeobox family. In terms of assembly, forms homodimers. May form heterodimeric complexes with TALE/BELL proteins BEL1, BLH2, BLH3, BLH8/PNF, BLH9/PNY and ATH1. Interacts with CCT8. Binds to MBP2C; this interaction reduces RNA binding capacity. Interacts with FTIP3 and FTIP4. Expressed in all four types of shoot apical meristems (SAM) i.e. in vegetative, axillary, inflorescence and floral.

It is found in the nucleus. The protein resides in the cell junction. It localises to the plasmodesma. Its subcellular location is the cytoplasm. The protein localises to the endosome. It is found in the cell membrane. Functionally, required for shoot apical meristem (SAM) formation during embryogenesis. Negatively regulates ASYMMETRIC LEAVES1 (AS1) and ASYMMETRIC LEAVES2 (AS2 or LBD6). Probably binds to the DNA sequence 5'-TGAC-3'. Binds to RNA. This Arabidopsis thaliana (Mouse-ear cress) protein is Homeobox protein SHOOT MERISTEMLESS.